We begin with the raw amino-acid sequence, 510 residues long: NAD(P)H-quinone oxidoreductase subunit 2 B, chloroplastic (510 aa).

Helical transmembrane passes span 24 to 44, 57 to 77, 99 to 119, 124 to 144, 149 to 169, 183 to 203, 227 to 247, 295 to 315, 323 to 343, 354 to 374, 392 to 412, 418 to 438, and 482 to 502; these read LLLF…GLIL, IPWL…ALLF, IFQF…VEYI, MAIT…MFLC, LITI…LSGY, YLLM…WLYG, PGIS…LSPA, WHLL…LIAI, MLAY…IVGD, YMLF…SFGL, AFLA…PPLA, LHLF…IGLL, and LSMI…NPII.

Belongs to the complex I subunit 2 family. As to quaternary structure, NDH is composed of at least 16 different subunits, 5 of which are encoded in the nucleus.

It is found in the plastid. The protein resides in the chloroplast thylakoid membrane. It catalyses the reaction a plastoquinone + NADH + (n+1) H(+)(in) = a plastoquinol + NAD(+) + n H(+)(out). The catalysed reaction is a plastoquinone + NADPH + (n+1) H(+)(in) = a plastoquinol + NADP(+) + n H(+)(out). NDH shuttles electrons from NAD(P)H:plastoquinone, via FMN and iron-sulfur (Fe-S) centers, to quinones in the photosynthetic chain and possibly in a chloroplast respiratory chain. The immediate electron acceptor for the enzyme in this species is believed to be plastoquinone. Couples the redox reaction to proton translocation, and thus conserves the redox energy in a proton gradient. This Morus indica (Mulberry) protein is NAD(P)H-quinone oxidoreductase subunit 2 B, chloroplastic.